Reading from the N-terminus, the 123-residue chain is Small ribosomal subunit protein uS12 (123 aa).

3-methylthioaspartic acid is present on D89.

Belongs to the universal ribosomal protein uS12 family. In terms of assembly, part of the 30S ribosomal subunit. Contacts proteins S8 and S17. May interact with IF1 in the 30S initiation complex.

Its function is as follows. With S4 and S5 plays an important role in translational accuracy. Interacts with and stabilizes bases of the 16S rRNA that are involved in tRNA selection in the A site and with the mRNA backbone. Located at the interface of the 30S and 50S subunits, it traverses the body of the 30S subunit contacting proteins on the other side and probably holding the rRNA structure together. The combined cluster of proteins S8, S12 and S17 appears to hold together the shoulder and platform of the 30S subunit. The sequence is that of Small ribosomal subunit protein uS12 from Gluconacetobacter diazotrophicus (strain ATCC 49037 / DSM 5601 / CCUG 37298 / CIP 103539 / LMG 7603 / PAl5).